The chain runs to 282 residues: MSDVEENNFEGRESRSQSKSPTGTPARVKSESRSGSRSPSRVSKHSESHSRSRSKSRSRSRRHSHRRYTRSRSHSHSHRRRSRSRSYTPEYRRRRSRSHSPMSNRRRHTGSRANPDPNTCLGVFGLSLYTTERDLREVFSRYGPLSGVNVVYDQRTGRSRGFAFVYFERIDDSKEAMERANGMELDGRRIRVDYSITKRAHTPTPGIYMGRPTHSGGGGGGGGGGGGGGGGRRRDSYYDRGYDRGYDRYEDYDYRYRRRSPSPYYSRYRSRSRSRSYSPRRY.

The interval 1–118 (MSDVEENNFE…TGSRANPDPN (118 aa)) is disordered. Serine 2 is modified (N-acetylserine). Serine 2 and serine 14 each carry phosphoserine. Phosphothreonine is present on threonine 24. A compositionally biased stretch (basic residues) spans 51-84 (RSRSKSRSRSRRHSHRRYTRSRSHSHSHRRRSRS). 3 positions are modified to phosphoserine: serine 82, serine 84, and serine 86. Threonine 88 is subject to Phosphothreonine. Over residues 92 to 110 (RRRRSRSHSPMSNRRRHTG) the composition is skewed to basic residues. A phosphoserine mark is found at serine 96 and serine 98. In terms of domain architecture, RRM spans 119 to 197 (TCLGVFGLSL…RRIRVDYSIT (79 aa)). Residue lysine 198 forms a Glycyl lysine isopeptide (Lys-Gly) (interchain with G-Cter in SUMO2) linkage. The interval 198–225 (KRAHTPTPGIYMGRPTHSGGGGGGGGGG) is linker. Disordered stretches follow at residues 201-245 (HTPT…YDRG) and 260-282 (SPSP…PRRY). 2 positions are modified to phosphothreonine: threonine 202 and threonine 204. A compositionally biased stretch (gly residues) spans 215–230 (SGGGGGGGGGGGGGGG). Residue arginine 232 is modified to Omega-N-methylarginine. Residues 232–245 (RRRDSYYDRGYDRG) are compositionally biased toward basic and acidic residues. Serine 236 is subject to Phosphoserine. The segment covering 268 to 282 (YRSRSRSRSYSPRRY) has biased composition (basic residues).

It belongs to the splicing factor SR family. Binds to A3 enhancer proteins SRp75, SRp55, SRp40 and SRp30. Interacts with ILDR1 (via C-terminus) and ILDR2. Post-translationally, phosphorylated in the RS domains.

Its subcellular location is the nucleus. Sequence-specific RNA-binding protein which participates in the control of pre-mRNA splicing. This chain is Transformer-2 protein homolog alpha, found in Homo sapiens (Human).